Here is a 695-residue protein sequence, read N- to C-terminus: Lactotransferrin (695 aa).

Positions 1-6 are cleaved as a signal peptide; the sequence is LGLCLA. 2 Transferrin-like domains span residues 12–339 and 351–680; these read VRWC…NLRE and VVWC…NLRR. 2 cysteine pairs are disulfide-bonded: Cys-15–Cys-51 and Cys-25–Cys-42. Asp-66 is a binding site for Fe(3+). Lys-79 is a catalytic residue. Tyr-98 provides a ligand contact to Fe(3+). 5 disulfides stabilise this stretch: Cys-121-Cys-204, Cys-163-Cys-179, Cys-166-Cys-189, Cys-176-Cys-187, and Cys-237-Cys-251. Residues Thr-123, Arg-127, Ala-129, and Gly-130 each contribute to the hydrogencarbonate site. Asn-143 is a glycosylation site (N-linked (GlcNAc...) asparagine). Residue Tyr-198 participates in Fe(3+) binding. His-259 contributes to the Fe(3+) binding site. The active-site Nucleophile is the Ser-265. Asn-287 is a glycosylation site (N-linked (GlcNAc...) asparagine). Cystine bridges form between Cys-354-Cys-386 and Cys-364-Cys-377. Asp-401 is a binding site for Fe(3+). Disulfide bonds link Cys-411–Cys-690, Cys-431–Cys-653, Cys-463–Cys-538, Cys-487–Cys-681, Cys-497–Cys-511, Cys-508–Cys-521, Cys-579–Cys-593, and Cys-631–Cys-636. Residue Pro-436 coordinates D-glucose. Tyr-439 lines the Fe(3+) pocket. Residues Thr-465, Arg-469, Ala-471, and Ala-472 each contribute to the hydrogencarbonate site. Asn-482 carries an N-linked (GlcNAc...) asparagine glycan. Tyr-532 is a Fe(3+) binding site. Asn-600 provides a ligand contact to D-glucose. His-601 provides a ligand contact to Fe(3+). Tyr-666 contributes to the D-glucose binding site.

The protein belongs to the transferrin family. As to quaternary structure, monomer. Found in a complex with LTF, CLU, EPPIN and SEMG1. Found in a complex with MPO and LTF; interacts directly with CP, allows Fe(3+) incorporation into LTF and activation of CP ferroxidase activity. Poly-N-acetyllactosaminic carbohydrate moiety seems to be needed for TLR4 activation.

The protein localises to the secreted. The protein resides in the cytoplasmic granule. In terms of biological role, transferrins are iron binding transport proteins which can bind two Fe(3+) ions in association with the binding of an anion, usually bicarbonate. Major iron-binding and multifunctional protein found in exocrine fluids such as breast milk and mucosal secretions. Has antimicrobial activity, which depends on the extracellular cation concentration. Antimicrobial properties include bacteriostasis, which is related to its ability to sequester free iron and thus inhibit microbial growth, as well as direct bactericidal properties leading to the release of lipopolysaccharides from the bacterial outer membrane. Can also prevent bacterial biofilm development in P.aeruginosa infection. Has weak antifungal activity against C.albicans. Has anabolic, differentiating and anti-apoptotic effects on osteoblasts and can also inhibit osteoclastogenesis, possibly playing a role in the regulation of bone growth. Promotes binding of species C adenoviruses to epithelial cells, promoting adenovirus infection. Can inhibit papillomavirus infections. Stimulates the TLR4 signaling pathway leading to NF-kappa-B activation and subsequent pro-inflammatory cytokine production while also interfering with the lipopolysaccharide (LPS)-stimulated TLR4 signaling. Inhibits neutrophil granulocyte migration to sites of apoptosis, when secreted by apoptotic cells. Stimulates VEGFA-mediated endothelial cell migration and proliferation. Binds heparin, chondroitin sulfate and possibly other glycosaminoglycans (GAGs). Also binds specifically to pneumococcal surface protein A (PspA), the lipid A portion of bacterial lipopolysaccharide (LPS), lysozyme and DNA. Its function is as follows. Lactoferricin binds to the bacterial surface and is crucial for the bactericidal functions. Has some antiviral activity against papillomavirus infection. N-terminal region shows strong antifungal activity against C.albicans. Contains two BBXB heparin-binding consensus sequences that appear to form the predominate functional GAG-binding site. Functionally, the lactotransferrin transferrin-like domain 1 functions as a serine protease of the peptidase S60 family that cuts arginine rich regions. This function contributes to the antimicrobial activity. Shows a preferential cleavage at -Arg-Ser-Arg-Arg-|- and -Arg-Arg-Ser-Arg-|-, and of Z-Phe-Arg-|-aminomethylcoumarin sites. The chain is Lactotransferrin (LTF) from Equus caballus (Horse).